Consider the following 532-residue polypeptide: MGFNVPVINRDSEILKADAKKWLEQQDNQKKCVLVIVSIALLLDNMLYMVIVPIIPKYLRDIHNYQVTFEGYHNETSQLANGTYLVREVGGRINFLDEELELGWLFASKALLQIFVNPFSGYIIDRVGYEIPMILGLCTMFFSTAIFALGKSYGVLLFARSLQGFGSAFADTSGLAMIADRFTEENERSAALGIALAFISFGCLVAPPFGSVLYSLAGKPVPFLILSFVCLADAIAVFMVINPHRRGTDSHGEKVQGTPMWRLFMDPFIACCSGALIMANVSLAFLEPTITTWMSEMMPDTPGWLVGVIWLPPFFPHVLGVYVTVKMLRAFPHHTWAIAMVGLAMEGIACFAIPYTTSVMQLVIPLSFVCFGIALIDTSLLPMLGHLVDTRHVSVYGSVYAIADISYSLAYAFGPIIAGWIVTNWGFTALNIIIFATNVTYAPVLFLLRKVHSYDTLGAKGDTAEMTQLNSSAPAGGYNGKPEATTAESYQGWEDQQSYQNQAQIPNHAVSFQDSRPQAEFPAGYDPLNPQW.

The Cytoplasmic segment spans residues 1 to 31 (MGFNVPVINRDSEILKADAKKWLEQQDNQKK). Residues 32-52 (CVLVIVSIALLLDNMLYMVIV) traverse the membrane as a helical segment. The Lumenal, vesicle portion of the chain corresponds to 53–101 (PIIPKYLRDIHNYQVTFEGYHNETSQLANGTYLVREVGGRINFLDEELE). N-linked (GlcNAc...) asparagine glycosylation is found at Asn-74 and Asn-81. A helical membrane pass occupies residues 102 to 121 (LGWLFASKALLQIFVNPFSG). Residues 122-130 (YIIDRVGYE) lie on the Cytoplasmic side of the membrane. Residues 131–151 (IPMILGLCTMFFSTAIFALGK) traverse the membrane as a helical segment. Residues 152 to 160 (SYGVLLFAR) are Lumenal, vesicle-facing. The chain crosses the membrane as a helical span at residues 161 to 180 (SLQGFGSAFADTSGLAMIAD). Over 181–191 (RFTEENERSAA) the chain is Cytoplasmic. Residues 192-213 (LGIALAFISFGCLVAPPFGSVL) form a helical membrane-spanning segment. Topologically, residues 214-219 (YSLAGK) are lumenal, vesicle. The chain crosses the membrane as a helical span at residues 220-242 (PVPFLILSFVCLADAIAVFMVIN). Residues 243–266 (PHRRGTDSHGEKVQGTPMWRLFMD) are Cytoplasmic-facing. Residues 267-286 (PFIACCSGALIMANVSLAFL) traverse the membrane as a helical segment. The Lumenal, vesicle portion of the chain corresponds to 287–303 (EPTITTWMSEMMPDTPG). A helical transmembrane segment spans residues 304–328 (WLVGVIWLPPFFPHVLGVYVTVKML). Over 329-335 (RAFPHHT) the chain is Cytoplasmic. Residues 336-356 (WAIAMVGLAMEGIACFAIPYT) form a helical membrane-spanning segment. The Lumenal, vesicle segment spans residues 357–367 (TSVMQLVIPLS). Residues 368 to 388 (FVCFGIALIDTSLLPMLGHLV) traverse the membrane as a helical segment. The Cytoplasmic segment spans residues 389-393 (DTRHV). Residues 394 to 412 (SVYGSVYAIADISYSLAYA) form a helical membrane-spanning segment. Topologically, residues 413–418 (FGPIIA) are lumenal, vesicle. The chain crosses the membrane as a helical span at residues 419 to 440 (GWIVTNWGFTALNIIIFATNVT). Topologically, residues 441–532 (YAPVLFLLRK…AGYDPLNPQW (92 aa)) are cytoplasmic.

This sequence belongs to the major facilitator superfamily. Vesicular transporter family. In terms of tissue distribution, detected in most regions of the nervous system including the nerve ring, the ventral and dorsal nerve cords, and the pharyngeal nervous system. Expressed in most cholinergic neurons. In addition, expressed in SIA, SIB and SMB sublateral motor neurons.

The protein resides in the cytoplasmic vesicle. Its subcellular location is the secretory vesicle. The protein localises to the synaptic vesicle membrane. Its function is as follows. Involved in acetylcholine transport into synaptic vesicles. The protein is Vesicular acetylcholine transporter unc-17 of Caenorhabditis elegans.